The following is a 235-amino-acid chain: 7-cyano-7-deazaguanine synthase (235 aa).

12-22 (FSGGQDSTACL) is a binding site for ATP. Cysteine 200, cysteine 215, cysteine 218, and cysteine 221 together coordinate Zn(2+).

It belongs to the QueC family. It depends on Zn(2+) as a cofactor.

The enzyme catalyses 7-carboxy-7-deazaguanine + NH4(+) + ATP = 7-cyano-7-deazaguanine + ADP + phosphate + H2O + H(+). It functions in the pathway purine metabolism; 7-cyano-7-deazaguanine biosynthesis. In terms of biological role, catalyzes the ATP-dependent conversion of 7-carboxy-7-deazaguanine (CDG) to 7-cyano-7-deazaguanine (preQ(0)). The chain is 7-cyano-7-deazaguanine synthase from Methylibium petroleiphilum (strain ATCC BAA-1232 / LMG 22953 / PM1).